Reading from the N-terminus, the 163-residue chain is Neurotrophin-3 (163 aa).

The N-terminal stretch at 1–3 is a signal peptide; sequence IQS. Residues 4 to 119 constitute a propeptide that is removed on maturation; sequence TSMDQGILTE…VLNRTSRRKR (116 aa). An N-linked (GlcNAc...) asparagine glycan is attached at N112. The tract at residues 112-132 is disordered; that stretch reads NRTSRRKREGKSHRGEYSVCD. A compositionally biased stretch (basic and acidic residues) spans 123 to 132; sequence SHRGEYSVCD.

It belongs to the NGF-beta family.

The protein resides in the secreted. Seems to promote the survival of visceral and proprioceptive sensory neurons. This is Neurotrophin-3 (NTF3) from Exiliboa placata (Oaxacan dwarf boa).